A 191-amino-acid chain; its full sequence is Protein GrpE (191 aa).

Residues 1-11 (MTDSSNAHEAE) show a composition bias toward basic and acidic residues. 2 disordered regions span residues 1-22 (MTDS…DNEI) and 172-191 (KVSK…NNNE).

The protein belongs to the GrpE family. Homodimer.

It localises to the cytoplasm. Its function is as follows. Participates actively in the response to hyperosmotic and heat shock by preventing the aggregation of stress-denatured proteins, in association with DnaK and GrpE. It is the nucleotide exchange factor for DnaK and may function as a thermosensor. Unfolded proteins bind initially to DnaJ; upon interaction with the DnaJ-bound protein, DnaK hydrolyzes its bound ATP, resulting in the formation of a stable complex. GrpE releases ADP from DnaK; ATP binding to DnaK triggers the release of the substrate protein, thus completing the reaction cycle. Several rounds of ATP-dependent interactions between DnaJ, DnaK and GrpE are required for fully efficient folding. In Chlamydia abortus (strain DSM 27085 / S26/3) (Chlamydophila abortus), this protein is Protein GrpE.